The primary structure comprises 408 residues: Aminoacylase-1 (408 aa).

His-80 provides a ligand contact to Zn(2+). The active site involves Asp-82. Zn(2+) is bound at residue Asp-113. The active-site Proton acceptor is Glu-147. Positions 148, 175, and 373 each coordinate Zn(2+).

This sequence belongs to the peptidase M20A family. Homodimer. Interacts with SPHK1. Requires Zn(2+) as cofactor.

The protein localises to the cytoplasm. The enzyme catalyses an N-acyl-L-amino acid + H2O = an L-alpha-amino acid + a carboxylate. It catalyses the reaction N-acetyl-L-methionine + H2O = L-methionine + acetate. It carries out the reaction N-acetyl-L-glutamine + H2O = L-glutamine + acetate. Its function is as follows. Catalyzes the hydrolysis of N-acetylated amino acids to acetate and free amino acids. This is Aminoacylase-1 (ACY1) from Pongo abelii (Sumatran orangutan).